The sequence spans 533 residues: Apolipoprotein N-acyltransferase (533 aa).

A run of 5 helical transmembrane segments spans residues 17 to 37 (FFLP…WPAV), 72 to 92 (LLFC…GGIL), 116 to 136 (GFRS…WAYM), 165 to 185 (GVWG…LLFM), and 190 to 210 (FQVK…PLLY). The CN hydrolase domain occupies 232-499 (VQPDIDPHEK…QSVLTADVPL (268 aa)). The active-site Proton acceptor is the E274. Residue K352 is part of the active site. Catalysis depends on C410, which acts as the Nucleophile. The helical transmembrane segment at 510–530 (PDLVPHVCLGIAGVLALVAAV) threads the bilayer.

Belongs to the CN hydrolase family. Apolipoprotein N-acyltransferase subfamily.

The protein resides in the cell inner membrane. The enzyme catalyses N-terminal S-1,2-diacyl-sn-glyceryl-L-cysteinyl-[lipoprotein] + a glycerophospholipid = N-acyl-S-1,2-diacyl-sn-glyceryl-L-cysteinyl-[lipoprotein] + a 2-acyl-sn-glycero-3-phospholipid + H(+). Its pathway is protein modification; lipoprotein biosynthesis (N-acyl transfer). Functionally, catalyzes the phospholipid dependent N-acylation of the N-terminal cysteine of apolipoprotein, the last step in lipoprotein maturation. The chain is Apolipoprotein N-acyltransferase from Chlorobaculum tepidum (strain ATCC 49652 / DSM 12025 / NBRC 103806 / TLS) (Chlorobium tepidum).